The primary structure comprises 338 residues: Ketol-acid reductoisomerase (NADP(+)) (338 aa).

Positions 1-181 (MKVSYDKDCD…GGGRTGIIET (181 aa)) constitute a KARI N-terminal Rossmann domain. NADP(+) is bound by residues 24–27 (YGSQ), Arg47, Ser50, Ser52, and 82–85 (DEFQ). Residue His107 is part of the active site. Gly133 lines the NADP(+) pocket. The KARI C-terminal knotted domain occupies 182–327 (TFKDETETDL…EKLRAMMPWI (146 aa)). Mg(2+) contacts are provided by Asp190, Glu194, Glu226, and Glu230. Ser251 serves as a coordination point for substrate.

Belongs to the ketol-acid reductoisomerase family. Mg(2+) serves as cofactor.

It catalyses the reaction (2R)-2,3-dihydroxy-3-methylbutanoate + NADP(+) = (2S)-2-acetolactate + NADPH + H(+). The catalysed reaction is (2R,3R)-2,3-dihydroxy-3-methylpentanoate + NADP(+) = (S)-2-ethyl-2-hydroxy-3-oxobutanoate + NADPH + H(+). Its pathway is amino-acid biosynthesis; L-isoleucine biosynthesis; L-isoleucine from 2-oxobutanoate: step 2/4. It participates in amino-acid biosynthesis; L-valine biosynthesis; L-valine from pyruvate: step 2/4. Functionally, involved in the biosynthesis of branched-chain amino acids (BCAA). Catalyzes an alkyl-migration followed by a ketol-acid reduction of (S)-2-acetolactate (S2AL) to yield (R)-2,3-dihydroxy-isovalerate. In the isomerase reaction, S2AL is rearranged via a Mg-dependent methyl migration to produce 3-hydroxy-3-methyl-2-ketobutyrate (HMKB). In the reductase reaction, this 2-ketoacid undergoes a metal-dependent reduction by NADPH to yield (R)-2,3-dihydroxy-isovalerate. This chain is Ketol-acid reductoisomerase (NADP(+)), found in Stutzerimonas stutzeri (strain A1501) (Pseudomonas stutzeri).